Reading from the N-terminus, the 571-residue chain is Glutamate--tRNA ligase (571 aa).

Residues 106-116 carry the 'HIGH' region motif; that stretch reads PNPDGAFHLGN.

The protein belongs to the class-I aminoacyl-tRNA synthetase family. Glutamate--tRNA ligase type 2 subfamily.

The protein localises to the cytoplasm. It carries out the reaction tRNA(Glu) + L-glutamate + ATP = L-glutamyl-tRNA(Glu) + AMP + diphosphate. Its function is as follows. Catalyzes the attachment of glutamate to tRNA(Glu) in a two-step reaction: glutamate is first activated by ATP to form Glu-AMP and then transferred to the acceptor end of tRNA(Glu). The protein is Glutamate--tRNA ligase of Pyrococcus abyssi (strain GE5 / Orsay).